Consider the following 360-residue polypeptide: Phospho-N-acetylmuramoyl-pentapeptide-transferase (360 aa).

10 consecutive transmembrane segments (helical) span residues 21–41 (YLTL…LWLG), 73–93 (TMGG…WGDL), 94–114 (TNHY…IGWV), 145–165 (AVTL…VPLF), 168–188 (VVVP…VGSS), 199–219 (GLAI…AYAS), 236–256 (AGEL…FLWF), 263–283 (VFMG…VAVI), 288–308 (IVLF…MLQV), and 339–359 (IVRF…TLKI).

It belongs to the glycosyltransferase 4 family. MraY subfamily. The cofactor is Mg(2+).

The protein localises to the cell inner membrane. The catalysed reaction is UDP-N-acetyl-alpha-D-muramoyl-L-alanyl-gamma-D-glutamyl-meso-2,6-diaminopimeloyl-D-alanyl-D-alanine + di-trans,octa-cis-undecaprenyl phosphate = di-trans,octa-cis-undecaprenyl diphospho-N-acetyl-alpha-D-muramoyl-L-alanyl-D-glutamyl-meso-2,6-diaminopimeloyl-D-alanyl-D-alanine + UMP. Its pathway is cell wall biogenesis; peptidoglycan biosynthesis. Its function is as follows. Catalyzes the initial step of the lipid cycle reactions in the biosynthesis of the cell wall peptidoglycan: transfers peptidoglycan precursor phospho-MurNAc-pentapeptide from UDP-MurNAc-pentapeptide onto the lipid carrier undecaprenyl phosphate, yielding undecaprenyl-pyrophosphoryl-MurNAc-pentapeptide, known as lipid I. The protein is Phospho-N-acetylmuramoyl-pentapeptide-transferase of Chromohalobacter salexigens (strain ATCC BAA-138 / DSM 3043 / CIP 106854 / NCIMB 13768 / 1H11).